Reading from the N-terminus, the 350-residue chain is Erythronate-4-phosphate dehydrogenase (350 aa).

Substrate-binding residues include Ser-45 and Thr-66. Residues 124–125 (QV), Asp-144, 203–205 (ASR), and Asp-226 each bind NAD(+). Arg-205 is an active-site residue. Glu-231 is a catalytic residue. His-248 acts as the Proton donor in catalysis. An NAD(+)-binding site is contributed by Gly-251.

This sequence belongs to the D-isomer specific 2-hydroxyacid dehydrogenase family. PdxB subfamily. Homodimer.

Its subcellular location is the cytoplasm. It carries out the reaction 4-phospho-D-erythronate + NAD(+) = (R)-3-hydroxy-2-oxo-4-phosphooxybutanoate + NADH + H(+). It participates in cofactor biosynthesis; pyridoxine 5'-phosphate biosynthesis; pyridoxine 5'-phosphate from D-erythrose 4-phosphate: step 2/5. Its function is as follows. Catalyzes the oxidation of erythronate-4-phosphate to 3-hydroxy-2-oxo-4-phosphonooxybutanoate. The chain is Erythronate-4-phosphate dehydrogenase from Legionella pneumophila subsp. pneumophila (strain Philadelphia 1 / ATCC 33152 / DSM 7513).